A 404-amino-acid polypeptide reads, in one-letter code: Caspase-1 (404 aa).

The CARD domain occupies 1 to 91 (MADKVLKEKR…YLAGTLGLSA (91 aa)). Positions 1-119 (MADKVLKEKR…SFPAPQAVQD (119 aa)) are excised as a propeptide. Lys-134 participates in a covalent cross-link: Glycyl lysine isopeptide (Lys-Gly) (interchain with G-Cter in ubiquitin). Catalysis depends on residues His-237 and Cys-285. A propeptide spans 298-316 (SVGVSGNLSLPTTEEFEDD) (interdomain linker). A Phosphoserine modification is found at Ser-302.

The protein belongs to the peptidase C14A family. Heterotetramer that consists of two anti-parallel arranged heterodimers, each one formed by a 20 kDa (Caspase-1 subunit p20) and a 10 kDa (Caspase-1 subunit p10) subunit. May be a component of the inflammasome, a protein complex which also includes PYCARD, CARD8 and NLRP2 and whose function would be the activation of pro-inflammatory caspases. Component of the AIM2 PANoptosome complex, a multiprotein complex that drives inflammatory cell death (PANoptosis). Interacts with CARD8; interacts with the released C-terminus of CARD8 which forms an inflammasome and directly activates CASP1 to promote pyroptosis. Both the p10 and p20 subunits interact with MEFV. Interacts with CARD17P/INCA and CARD18. Interacts with SERPINB1; this interaction regulates CASP1 activity. In terms of assembly, heterotetramer that consists of two anti-parallel arranged heterodimers, each one formed by a 20 kDa (Caspase-1 subunit p20) and a 10 kDa (Caspase-1 subunit p10) subunit. Can form a heterodimer with isoform epsilon which then has an inhibitory effect. As to quaternary structure, heterotetramer that consists of two anti-parallel arranged heterodimers, each one formed by a 20 kDa (Caspase-1 subunit p20) and a 10 kDa (Caspase-1 subunit p10) subunit. Can form a heterodimer with Caspase-1 subunit p20 which then has an inhibitory effect. The two subunits are derived from the precursor sequence by an autocatalytic mechanism. Post-translationally, ubiquitinated via 'Lys-11'-linked polyubiquitination. Deubiquitinated by USP8. In terms of processing, cleavage in the interdomain linker region is required to induce pyroptosis. In terms of tissue distribution, expressed in larger amounts in spleen and lung. Detected in liver, heart, small intestine, colon, thymus, prostate, skeletal muscle, peripheral blood leukocytes, kidney and testis. No expression in the brain.

The protein localises to the cytoplasm. The protein resides in the cell membrane. It catalyses the reaction Strict requirement for an Asp residue at position P1 and has a preferred cleavage sequence of Tyr-Val-Ala-Asp-|-.. (Microbial infection) Specifically inhibited by the cowpox virus Crma protein. Its function is as follows. Thiol protease involved in a variety of inflammatory processes by proteolytically cleaving other proteins, such as the precursors of the inflammatory cytokines interleukin-1 beta (IL1B) and interleukin 18 (IL18) as well as the pyroptosis inducer Gasdermin-D (GSDMD), into active mature peptides. Plays a key role in cell immunity as an inflammatory response initiator: once activated through formation of an inflammasome complex, it initiates a pro-inflammatory response through the cleavage of the two inflammatory cytokines IL1B and IL18, releasing the mature cytokines which are involved in a variety of inflammatory processes. Cleaves a tetrapeptide after an Asp residue at position P1. Also initiates pyroptosis, a programmed lytic cell death pathway, through cleavage of GSDMD. In contrast to cleavage of interleukin IL1B, recognition and cleavage of GSDMD is not strictly dependent on the consensus cleavage site but depends on an exosite interface on CASP1 that recognizes and binds the Gasdermin-D, C-terminal (GSDMD-CT) part. Cleaves and activates CASP7 in response to bacterial infection, promoting plasma membrane repair. Upon inflammasome activation, during DNA virus infection but not RNA virus challenge, controls antiviral immunity through the cleavage of CGAS, rendering it inactive. In apoptotic cells, cleaves SPHK2 which is released from cells and remains enzymatically active extracellularly. In terms of biological role, apoptosis inactive. The protein is Caspase-1 (CASP1) of Homo sapiens (Human).